A 1035-amino-acid polypeptide reads, in one-letter code: Protein hir-1 (1035 aa).

7 WD repeats span residues 15–54 (QKDF…NSHD), 68–107 (HHLG…PSHT), 129–168 (GHDN…KLKT), 171–210 (VHQS…PNAT), 232–275 (PLTT…SEIN), 299–338 (DENS…PVLI), and 342–383 (IASK…WVAK). The segment at 393 to 479 (KYGGSRKGMG…PEEESADKTA (87 aa)) is disordered. Positions 408-425 (DGLHLENHSKEKELRGAE) are enriched in basic and acidic residues.

It belongs to the WD repeat HIR1 family.

It localises to the nucleus. Functionally, required for replication-independent chromatin assembly and for the periodic repression of histone gene transcription during the cell cycle. The sequence is that of Protein hir-1 (hir-1) from Neurospora crassa (strain ATCC 24698 / 74-OR23-1A / CBS 708.71 / DSM 1257 / FGSC 987).